We begin with the raw amino-acid sequence, 515 residues long: Protein translocase subunit SecD (515 aa).

Residues 6-26 form a helical membrane-spanning segment; it reads LYSLIFIIILTAFAVWVDLPG. Positions 141–186 are disordered; sequence AITNGNQNQNSTKNGTPTPGTTPTPESTPQANQTPVAANVTPTPED. The span at 150-169 shows a compositional bias: low complexity; sequence NSTKNGTPTPGTTPTPESTP. Positions 170–186 are enriched in polar residues; sequence QANQTPVAANVTPTPED. A run of 5 helical transmembrane segments spans residues 322–342, 344–364, 367–387, 427–447, and 450–470; these read RSIR…ILYY, LPGF…FALF, IPVT…GMAV, ISTL…GASV, and GFAI…IFVT.

This sequence belongs to the SecD/SecF family. SecD subfamily. Forms a complex with SecF. Part of the essential Sec protein translocation apparatus which comprises SecA, SecYEG and auxiliary proteins SecDF. Other proteins may also be involved.

It is found in the cell membrane. Its function is as follows. Part of the Sec protein translocase complex. Interacts with the SecYEG preprotein conducting channel. SecDF uses the proton motive force (PMF) to complete protein translocation after the ATP-dependent function of SecA. In Thermobaculum terrenum (strain ATCC BAA-798 / CCMEE 7001 / YNP1), this protein is Protein translocase subunit SecD.